A 636-amino-acid chain; its full sequence is Threonine--tRNA ligase (636 aa).

Positions 1–61 constitute a TGS domain; it reads MLKITLKDGS…NENCEVEILS (61 aa). Residues 244–534 are catalytic; the sequence is EHRKLGKELD…LIEHYEGKFP (291 aa). Cys-335, His-386, and His-511 together coordinate Zn(2+).

The protein belongs to the class-II aminoacyl-tRNA synthetase family. As to quaternary structure, homodimer. It depends on Zn(2+) as a cofactor.

Its subcellular location is the cytoplasm. The enzyme catalyses tRNA(Thr) + L-threonine + ATP = L-threonyl-tRNA(Thr) + AMP + diphosphate + H(+). Functionally, catalyzes the attachment of threonine to tRNA(Thr) in a two-step reaction: L-threonine is first activated by ATP to form Thr-AMP and then transferred to the acceptor end of tRNA(Thr). Also edits incorrectly charged L-seryl-tRNA(Thr). The chain is Threonine--tRNA ligase from Natranaerobius thermophilus (strain ATCC BAA-1301 / DSM 18059 / JW/NM-WN-LF).